Here is a 655-residue protein sequence, read N- to C-terminus: p-hydroxybenzoic acid efflux pump subunit AaeB (655 aa).

The Periplasmic segment spans residues 1-12 (MGIFSIANQHIR). The helical transmembrane segment at 13-33 (FAVKLACAIVLALFIGFHFQL) threads the bilayer. Residues 34 to 37 (ETPR) are Cytoplasmic-facing. Residues 38-58 (WAVLTAAIVAAGPAFAAGGEP) form a helical membrane-spanning segment. At 59–68 (YSGAIRYRGM) the chain is on the periplasmic side. The chain crosses the membrane as a helical span at residues 69 to 89 (LRIIGTFIGCIAALIIIISMI). Topologically, residues 90–92 (RAP) are cytoplasmic. The helical transmembrane segment at 93 to 113 (LLMILVCCVWVGFCTWISSLV) threads the bilayer. The Periplasmic portion of the chain corresponds to 114–120 (RIENSYA). A helical membrane pass occupies residues 121-141 (WGLSGYTALIIVITIQTEPLL). The Cytoplasmic portion of the chain corresponds to 142-151 (TPQFALERCS). The chain crosses the membrane as a helical span at residues 152–172 (EIVIGIGCAILADLLFSPRSI). Topologically, residues 173–369 (KQEVDRELDS…RTTLSCILGT (197 aa)) are periplasmic. A helical transmembrane segment spans residues 370 to 390 (LFWLWTGWTSGNGEMVMIAVV). The Cytoplasmic segment spans residues 391 to 406 (TSLAMRLPNPRMVCID). The chain crosses the membrane as a helical span at residues 407–427 (FIYGTLAALPLGLLYFLVIIP). At 428–430 (NTQ) the chain is on the periplasmic side. Residues 431 to 451 (QSMLLLCLSLAVLGFFIGIEV) form a helical membrane-spanning segment. The Cytoplasmic segment spans residues 452–458 (QKRRLGS). A helical membrane pass occupies residues 459–479 (MGALASTINIIVLDNPMTFHF). Residues 480–481 (SQ) are Periplasmic-facing. Residues 482–502 (FLDSALGQIVGCMLAFIVILL) form a helical membrane-spanning segment. Over 503–655 (VRDKSKDRTG…HKYQNALTDS (153 aa)) the chain is Cytoplasmic.

This sequence belongs to the aromatic acid exporter ArAE (TC 2.A.85) family.

The protein localises to the cell inner membrane. In terms of biological role, forms an efflux pump with AaeA. Could function as a metabolic relief valve, allowing to eliminate certain compounds when they accumulate to high levels in the cell. This Salmonella paratyphi A (strain ATCC 9150 / SARB42) protein is p-hydroxybenzoic acid efflux pump subunit AaeB.